The sequence spans 193 residues: Calcium-binding protein E63-1 (193 aa).

EF-hand domains lie at 35–70 (VEIK…LGIN), 71–106 (VSDE…IQAL), 127–162 (DVTE…IGEP), and 163–193 (LNEQ…RLLL). The Ca(2+) site is built by aspartate 48, asparagine 50, aspartate 52, arginine 54, and glutamate 59. Aspartate 140, aspartate 142, asparagine 144, glutamate 151, aspartate 176, aspartate 178, aspartate 180, arginine 182, and glutamate 187 together coordinate Ca(2+).

This chain is Calcium-binding protein E63-1 (Eip63F-1), found in Drosophila melanogaster (Fruit fly).